Reading from the N-terminus, the 391-residue chain is 3-ketoacyl-CoA thiolase (391 aa).

The active-site Acyl-thioester intermediate is cysteine 90. Residues histidine 347 and cysteine 377 each act as proton acceptor in the active site.

This sequence belongs to the thiolase-like superfamily. Thiolase family.

It catalyses the reaction an acyl-CoA + acetyl-CoA = a 3-oxoacyl-CoA + CoA. It functions in the pathway lipid metabolism; fatty acid beta-oxidation. Involved in the degradation of long-chain fatty acids. This is 3-ketoacyl-CoA thiolase (fadA) from Bacillus subtilis (strain 168).